The chain runs to 231 residues: MSERAPVVTIDGPSGAGKGTIAHLLAKHYGWQLLDSGAIYRVLALAALHHNVELENEEAITLLAAHLDVQFLAGGDKDAIKVVLEGEDVTGAIRTQECSNAASKVAAFPRVREALLRRQRAFCQAPGLIADGRDMGTVVFPTAPAKLYLTASAEERAQRRYNQLQDKGFDVKIDRLLAEIQERDDRDMNRPVAPLVPADDALVIDTTGIGIDDVFAQCVAHINDKLSASGF.

Residue 12–20 coordinates ATP; that stretch reads GPSGAGKGT.

Belongs to the cytidylate kinase family. Type 1 subfamily.

It is found in the cytoplasm. The enzyme catalyses CMP + ATP = CDP + ADP. It carries out the reaction dCMP + ATP = dCDP + ADP. This is Cytidylate kinase from Shewanella amazonensis (strain ATCC BAA-1098 / SB2B).